The sequence spans 308 residues: Serine/threonine-protein phosphatase 4 catalytic subunit (308 aa).

Residues Asp51, His53, Asp79, and Asn111 each contribute to the Mn(2+) site. The active-site Proton donor is His112. Mn(2+) is bound by residues His161 and His235. Leu308 carries the post-translational modification Leucine methyl ester.

The protein belongs to the PPP phosphatase family. PP-4 (PP-X) subfamily. Catalytic subunit of the histone H2A phosphatase complex (HTP-C) containing PPH3, PSY2 and PSY4. Mn(2+) is required as a cofactor.

It localises to the cytoplasm. The protein localises to the nucleus. The catalysed reaction is O-phospho-L-seryl-[protein] + H2O = L-seryl-[protein] + phosphate. It catalyses the reaction O-phospho-L-threonyl-[protein] + H2O = L-threonyl-[protein] + phosphate. Functionally, forms the histone H2A phosphatase complex in association with the regulatory subunits PSY2 and PSY4, which dephosphorylates H2AS128ph (gamma-H2A) that has been displaced from sites of DNA lesions in the double-stranded DNA break repair process. Dephosphorylation is necessary for efficient recovery from the DNA damage checkpoint. The chain is Serine/threonine-protein phosphatase 4 catalytic subunit (PPH3) from Kluyveromyces lactis (strain ATCC 8585 / CBS 2359 / DSM 70799 / NBRC 1267 / NRRL Y-1140 / WM37) (Yeast).